Consider the following 277-residue polypeptide: MYINFPNINPIIFSIGSFKAHWYGFMYLISFMFAVWYGKKSVEKKNQIKINIENLLYIIFISSCIGGRIGYIIFYNFSYFSQNILCSLHIWEGGMSFHGGLIGAIIAMYYLSLKQNVKILKISDFIVPLVPFGLGAGRLGNFINSELFGRIAPNFPYAFLFPNTYKEDLKIVSKNPELQDILDKYGVLPRHPSQLYEFFLEGIFLFFIIYFFTRKKRNTGSISALFLISYGILRIISEFFREPDPQIGLLKNIITMGQILSIPMIIIGVLYVNLFIK.

The next 4 membrane-spanning stretches (helical) occupy residues 11–31 (IIFSIGSFKAHWYGFMYLISF), 55–75 (LLYIIFISSCIGGRIGYIIFY), 93–113 (GGMSFHGGLIGAIIAMYYLSL), and 117–137 (VKILKISDFIVPLVPFGLGAG). An a 1,2-diacyl-sn-glycero-3-phospho-(1'-sn-glycerol)-binding site is contributed by Arg138. 3 helical membrane passes run 192–212 (PSQLYEFFLEGIFLFFIIYFF), 220–240 (GSISALFLISYGILRIISEFF), and 256–276 (MGQILSIPMIIIGVLYVNLFI).

It belongs to the Lgt family.

The protein localises to the cell inner membrane. It carries out the reaction L-cysteinyl-[prolipoprotein] + a 1,2-diacyl-sn-glycero-3-phospho-(1'-sn-glycerol) = an S-1,2-diacyl-sn-glyceryl-L-cysteinyl-[prolipoprotein] + sn-glycerol 1-phosphate + H(+). The protein operates within protein modification; lipoprotein biosynthesis (diacylglyceryl transfer). Catalyzes the transfer of the diacylglyceryl group from phosphatidylglycerol to the sulfhydryl group of the N-terminal cysteine of a prolipoprotein, the first step in the formation of mature lipoproteins. The polypeptide is Phosphatidylglycerol--prolipoprotein diacylglyceryl transferase (Buchnera aphidicola subsp. Schizaphis graminum (strain Sg)).